A 243-amino-acid polypeptide reads, in one-letter code: Probable enoyl-CoA hydratase echA6 (243 aa).

This sequence belongs to the enoyl-CoA hydratase/isomerase family.

The enzyme catalyses a (3S)-3-hydroxyacyl-CoA = a (2E)-enoyl-CoA + H2O. The catalysed reaction is a 4-saturated-(3S)-3-hydroxyacyl-CoA = a (3E)-enoyl-CoA + H2O. Functionally, could possibly oxidize fatty acids using specific components. In Mycobacterium bovis (strain ATCC BAA-935 / AF2122/97), this protein is Probable enoyl-CoA hydratase echA6 (echA6).